Reading from the N-terminus, the 406-residue chain is Serine/threonine transporter SstT (406 aa).

9 consecutive transmembrane segments (helical) span residues 11–31 (IGLV…GWLM), 45–65 (FVGA…MAAI), 79–99 (VLIM…VASF), 141–161 (AIAN…GLAL), 185–205 (FVIA…IAET), 216–236 (LLTI…PIIV), 298–318 (MAGA…TLGV), 330–350 (VVAT…LLLI), and 357–377 (FNIP…IGVV).

Belongs to the dicarboxylate/amino acid:cation symporter (DAACS) (TC 2.A.23) family.

It is found in the cell inner membrane. It catalyses the reaction L-serine(in) + Na(+)(in) = L-serine(out) + Na(+)(out). The enzyme catalyses L-threonine(in) + Na(+)(in) = L-threonine(out) + Na(+)(out). Involved in the import of serine and threonine into the cell, with the concomitant import of sodium (symport system). The polypeptide is Serine/threonine transporter SstT (Psychrobacter sp. (strain PRwf-1)).